A 310-amino-acid polypeptide reads, in one-letter code: Capsid assembly scaffolding protein (310 aa).

Residues 46–102 are disordered; it reads VLSDEPTSHNDDPYAAGVDPFADGEDDEGRIQVRISEDGNEAGFDTDGDNSEVETEG. The segment covering 83–102 has biased composition (acidic residues); it reads DGNEAGFDTDGDNSEVETEG.

The protein belongs to the T7likevirus capsid assembly scaffolding protein family.

Its function is as follows. Scaffolding protein involved in the icosahedric procapsid assembly. Coassembles with the capsid proteins to form the procapsid, in which the scaffolding protein is found within the external shell of icosahedrally arranged capsid protein subunits. In a subsequent step the scaffolding protein molecules are released from the procapsid. Facilitates assembly by binding to gp10 hexamers but not the pentamers and locking them into a morphogenically correct conformation. This chain is Capsid assembly scaffolding protein (9), found in Enterobacteria phage T3 (Bacteriophage T3).